Reading from the N-terminus, the 416-residue chain is Secreted RxLR effector protein 25 (416 aa).

Positions 1–20 (MRSWLLLLVGLSSYFALSTS) are cleaved as a signal peptide. Residues 49-88 (RKLRAPGGDTNTLKDSGKARREKKVWKLFCRVFLQLDDEK) carry the RxLR-dEER motif.

This sequence belongs to the RxLR effector family.

The protein localises to the secreted. It localises to the host cytoplasm. Its subcellular location is the host nucleus. Functionally, effector that partially suppresses the tobacco programmed cell death induced by cell death-inducing proteins. The polypeptide is Secreted RxLR effector protein 25 (Plasmopara viticola (Downy mildew of grapevine)).